The sequence spans 546 residues: CTP synthase (546 aa).

Residues 1–266 (MTTNYIFVTG…DDLVCQRFGI (266 aa)) are amidoligase domain. Ser-14 contributes to the CTP binding site. Position 14 (Ser-14) interacts with UTP. ATP-binding positions include 15–20 (SLGKGI) and Asp-72. Mg(2+) contacts are provided by Asp-72 and Glu-140. CTP contacts are provided by residues 147–149 (DIE), 187–192 (KTKPTQ), and Lys-223. UTP-binding positions include 187 to 192 (KTKPTQ) and Lys-223. 239–241 (KDV) lines the ATP pocket. The 252-residue stretch at 291-542 (VIGMVGKYIE…VKAAGESVRG (252 aa)) folds into the Glutamine amidotransferase type-1 domain. Residue Gly-352 coordinates L-glutamine. Cys-379 functions as the Nucleophile; for glutamine hydrolysis in the catalytic mechanism. L-glutamine is bound by residues 380 to 383 (LGMQ), Glu-403, and Arg-470. Residues His-515 and Glu-517 contribute to the active site.

It belongs to the CTP synthase family. Homotetramer.

The catalysed reaction is UTP + L-glutamine + ATP + H2O = CTP + L-glutamate + ADP + phosphate + 2 H(+). The enzyme catalyses L-glutamine + H2O = L-glutamate + NH4(+). It catalyses the reaction UTP + NH4(+) + ATP = CTP + ADP + phosphate + 2 H(+). Its pathway is pyrimidine metabolism; CTP biosynthesis via de novo pathway; CTP from UDP: step 2/2. Allosterically activated by GTP, when glutamine is the substrate; GTP has no effect on the reaction when ammonia is the substrate. The allosteric effector GTP functions by stabilizing the protein conformation that binds the tetrahedral intermediate(s) formed during glutamine hydrolysis. Inhibited by the product CTP, via allosteric rather than competitive inhibition. Its function is as follows. Catalyzes the ATP-dependent amination of UTP to CTP with either L-glutamine or ammonia as the source of nitrogen. Regulates intracellular CTP levels through interactions with the four ribonucleotide triphosphates. In Aliivibrio fischeri (strain MJ11) (Vibrio fischeri), this protein is CTP synthase.